A 94-amino-acid polypeptide reads, in one-letter code: Co-chaperonin GroES (94 aa).

It belongs to the GroES chaperonin family. In terms of assembly, heptamer of 7 subunits arranged in a ring. Interacts with the chaperonin GroEL.

The protein resides in the cytoplasm. Functionally, together with the chaperonin GroEL, plays an essential role in assisting protein folding. The GroEL-GroES system forms a nano-cage that allows encapsulation of the non-native substrate proteins and provides a physical environment optimized to promote and accelerate protein folding. GroES binds to the apical surface of the GroEL ring, thereby capping the opening of the GroEL channel. This Clostridium kluyveri (strain NBRC 12016) protein is Co-chaperonin GroES.